Reading from the N-terminus, the 316-residue chain is MSNKDQILTSPYLQFNRSQWAALRDSVPMTLTEGEIARLKGINEDLSLEEVAEIYLPLSRLLNFYISSNLRRQAVLEQFLGTNGQRIPYIISIAGSVAVGKSTTARVLQALLSRWPEHRRVELITTDGFLHPNAVLKERNLMKKKGFPQSYDMHRLVKFVSDIKSGVPNVTAPVYSHLIYDVIPDGDKVVNQPDILILEGLNVLQSGMDYPHDPHHVFVSDFVDFSIYVDAPEDLLQRWYINRFLKFREGAFTDPDSYFHHYAKLSEDEAVNIATQLWKEINWLNLKENILPTRERASLIMTKSANHAVDCVRLRK.

95-102 serves as a coordination point for ATP; that stretch reads GSVAVGKS.

It belongs to the prokaryotic pantothenate kinase family.

It is found in the cytoplasm. It catalyses the reaction (R)-pantothenate + ATP = (R)-4'-phosphopantothenate + ADP + H(+). Its pathway is cofactor biosynthesis; coenzyme A biosynthesis; CoA from (R)-pantothenate: step 1/5. This Cronobacter sakazakii (strain ATCC BAA-894) (Enterobacter sakazakii) protein is Pantothenate kinase.